Reading from the N-terminus, the 386-residue chain is Small ribosomal subunit protein uS3m (386 aa).

Belongs to the universal ribosomal protein uS3 family.

It localises to the mitochondrion. In terms of biological role, essential for mitochondrial protein synthesis and required for the maturation of small ribosomal subunits. This Wickerhamomyces canadensis (Yeast) protein is Small ribosomal subunit protein uS3m (VAR1).